We begin with the raw amino-acid sequence, 2567 residues long: Unconventional myosin-XVIIIb (2567 aa).

Residues 41-508 (LVRGTEKEAK…SRDSDQAPED (468 aa)) form a disordered region. A compositionally biased stretch (basic and acidic residues) spans 44–54 (GTEKEAKEARQ). Over residues 71-104 (SISQPNSKSSSGTRSGSQQISQDDQSSSPGSSDI) the composition is skewed to low complexity. 2 stretches are compositionally biased toward basic and acidic residues: residues 105 to 116 (LGKESEGSRSPD) and 160 to 176 (LDPDSAKPEKTHPHDAP). Over residues 196-206 (SRTPCGSQAST) the composition is skewed to polar residues. Basic and acidic residues-rich tracts occupy residues 251–265 (TELKEAEPQGKDRQG), 278–287 (RPGKAEKEGA), and 326–349 (SKWDGPQNKKDKEGVLLSKAEKTG). The segment covering 350–362 (EPQTQMEKTSQVQ) has biased composition (polar residues). Basic and acidic residues-rich tracts occupy residues 367–377 (DDLRMGEKAGE), 410–420 (SQTEKGCEAPK), 471–485 (LEKDAERPRIRKENQ), and 492–508 (EEGKGGQSRDSDQAPED). In terms of domain architecture, Myosin motor spans 571-1333 (DQVEDLASLI…VISRLEKQRE (763 aa)). Residue 660-667 (GWSGAGKT) participates in ATP binding. A disordered region spans residues 1208–1232 (VESRSGQESPPPPQPGRDKPGAGGP). Residues 1213–1240 (GQESPPPPQPGRDKPGAGGPLALDIPAL) are GPA. A Phosphoserine modification is found at S1216. One can recognise an IQ domain in the interval 1336 to 1365 (VSQSIVLFQAACKGFLSRQEFKKLKIRRLA). Coiled-coil stretches lie at residues 1396–1783 (SATI…GLIG), 1825–1961 (KTSV…STVD), and 2014–2090 (ESQQ…VASS). A tail region spans residues 1426–2083 (NELRQNTDLL…IRRIADLQAA (658 aa)). The residue at position 1829 (S1829) is a Phosphoserine. Over residues 2139–2153 (TMRTPSRQSATSSRI) the composition is skewed to polar residues. Disordered stretches follow at residues 2139–2194 (TMRT…PVSP) and 2217–2249 (STERLEPASSPLASRSTNTSPLSREKLPSPSAA). Over residues 2158 to 2167 (INEEAGDTER) the composition is skewed to basic and acidic residues. The span at 2168–2185 (TQSALALSRARSTNVHSK) shows a compositional bias: polar residues. The residue at position 2193 (S2193) is a Phosphoserine. Residues 2227–2238 (PLASRSTNTSPL) show a composition bias toward polar residues. S2296 and S2309 each carry phosphoserine. Residues 2357–2376 (SRPSMGRKLSSPTTPRDMLL) are disordered. Residue S2377 is modified to Phosphoserine. Disordered stretches follow at residues 2444 to 2471 (FLPAIRKPQTPTSLAGSAKGGQDGSQRS) and 2494 to 2567 (KSPE…YLQK). Residues 2494–2504 (KSPEPKEDPAH) show a composition bias toward basic and acidic residues. A compositionally biased stretch (low complexity) spans 2506–2520 (SDSSSSSGSIVSFKS). Positions 2537 to 2556 (GGERTSPERREPGTGRKDDD) are enriched in basic and acidic residues.

It belongs to the TRAFAC class myosin-kinesin ATPase superfamily. Myosin family. In terms of assembly, homodimer. May interact with F actin through the GPA motif (Gly/Pro/Ala-rich). Selectively expressed in cardiac and skeletal muscles. Weakly expressed in testis, pancreas, placenta, prostate, lung and thymus.

It localises to the cytoplasm. The protein localises to the nucleus. It is found in the myofibril. The protein resides in the sarcomere. Functionally, may be involved in intracellular trafficking of the muscle cell when in the cytoplasm, whereas entering the nucleus, may be involved in the regulation of muscle specific genes. May play a role in the control of tumor development and progression; restored MYO18B expression in lung cancer cells suppresses anchorage-independent growth. In Homo sapiens (Human), this protein is Unconventional myosin-XVIIIb (MYO18B).